Reading from the N-terminus, the 232-residue chain is MLGAMFRADTLMPANLNPQGDGHYFIDRDGKAFRHILNFLRLGRLDLPRGYGETALLKAEADFYQIRPLLDALRELEASRGTPASTAALLHADVDVSPRQVHFSARRGPHHYELSSVQVDTFRANLFCTDPECLAAMRNRFGVAIGDRAEGGPHFRLEWASRPQELPEVEYQRLGLQPLWTGGPEDRREVANTPTFLEEVLRVALEHGFRLDSVFPDPEDLLNSRSLRFVRH.

A BTB domain is found at 1–49 (MLGAMFRADTLMPANLNPQGDGHYFIDRDGKAFRHILNFLRLGRLDLPR).

In terms of assembly, homopentamer. Interacts with KCTD6 and KCTD21; KCTD11 and KCTD6 or KCTD21 may associate in pentameric assemblies. Component of the BCR(KCTD11) E3 ubiquitin ligase complex, at least composed of CUL3 and KCTD11 and RBX1. Interacts (via BTB domain) with CUL3; initially a 4:4 stoichiometry has been reported, however, electron microscopy revealed pentameric states of the BTB domain. In terms of tissue distribution, weakly expressed in lung. In the cerebellum, higher expression in non proliferating external granule cells layer than in highly proliferating ones.

The protein operates within protein modification; protein ubiquitination. In terms of biological role, plays a role as a marker and a regulator of neuronal differentiation; Up-regulated by a variety of neurogenic signals, such as retinoic acid, epidermal growth factor/EGF and NGFB/nerve growth factor. Induces apoptosis, growth arrest and the expression of cyclin-dependent kinase inhibitor CDKN1B. Plays a role as a tumor repressor and inhibits cell growth and tumorigenicity of medulloblastoma (MDB). Acts as a probable substrate-specific adapter for a BCR (BTB-CUL3-RBX1) E3 ubiquitin-protein ligase complex towards HDAC1. Functions as antagonist of the Hedgehog pathway on cell proliferation and differentiation by affecting the nuclear transfer of transcription factor GLI1, thus maintaining cerebellar granule cells in undifferentiated state, this effect probably occurs via HDAC1 down-regulation, keeping GLI1 acetylated and inactive. When knock-down, Hedgehog antagonism is impaired and proliferation of granule cells is sustained. Activates the caspase cascade. The chain is BTB/POZ domain-containing protein KCTD11 (Kctd11) from Mus musculus (Mouse).